The sequence spans 805 residues: Endonuclease MutS2 (805 aa).

344–351 contacts ATP; sequence GPNGGGKT. Residues 705 to 724 form a disordered region; it reads RSRSEKLQAASEARPSAPPG. A Smr domain is found at 729–804; sequence LDVRGLRVEE…GDAVTVVSLR (76 aa).

Belongs to the DNA mismatch repair MutS family. MutS2 subfamily. Homodimer. Binds to stalled ribosomes, contacting rRNA.

Its function is as follows. Endonuclease that is involved in the suppression of homologous recombination and thus may have a key role in the control of bacterial genetic diversity. Acts as a ribosome collision sensor, splitting the ribosome into its 2 subunits. Detects stalled/collided 70S ribosomes which it binds and splits by an ATP-hydrolysis driven conformational change. Acts upstream of the ribosome quality control system (RQC), a ribosome-associated complex that mediates the extraction of incompletely synthesized nascent chains from stalled ribosomes and their subsequent degradation. Probably generates substrates for RQC. This Anaeromyxobacter sp. (strain Fw109-5) protein is Endonuclease MutS2.